The sequence spans 448 residues: MNNHTLNIIILAAGKGTRMQFDHPKLLHLLGGKPILEHVINLAQSLCPKTITVIYNKQYKKFKIKNKNNSITWIKQKKILGTGNAISQIINNYKDHENILILYGDVPLISKNSIQKMLLKKKNSTITLLTAKLNNPEEYGRIIRKNKKIVKIIEYKDATDEQLNIKEVNSGILIVSSTNLKKWIFQIHAKNNQNEYYITDIISLANKDNHKINSVRPEKNDEIQGINNLLQLVRAEKIYQKQQAKLLLLSGIMIYNPSNFSLRGTLKHGKNIKIDHGVILEGSVKIGNSVIIEPGCIIKNSTIGNNCTIKAYSIIEKTIISNKCIVGPFTHLQHGTVLKNNTHVGNFVEIKKTTLGSYSKAKHLSYLGNSQIGQKVNIGAGTVTCNYNGKKKLDTIIGDNVFIGSSTQLIAPINIKKGTIIAAGTTVMKNIHEPSLVYNEKKQIHKKL.

A pyrophosphorylase region spans residues 1-229 (MNNHTLNIII…NDEIQGINNL (229 aa)). UDP-N-acetyl-alpha-D-glucosamine is bound by residues 11–14 (LAAG), Lys25, Gln76, 81–82 (GT), 103–105 (YGD), Gly140, Glu154, Asn169, and Asn227. A Mg(2+)-binding site is contributed by Asp105. Asn227 lines the Mg(2+) pocket. The tract at residues 230 to 250 (LQLVRAEKIYQKQQAKLLLLS) is linker. The N-acetyltransferase stretch occupies residues 251–448 (GIMIYNPSNF…NEKKQIHKKL (198 aa)). Position 351 (Lys351) interacts with UDP-N-acetyl-alpha-D-glucosamine. His363 acts as the Proton acceptor in catalysis. UDP-N-acetyl-alpha-D-glucosamine-binding residues include Tyr366 and Asn377. Acetyl-CoA is bound by residues Ala380, 386 to 387 (NY), Ser405, and Ala423.

This sequence in the N-terminal section; belongs to the N-acetylglucosamine-1-phosphate uridyltransferase family. The protein in the C-terminal section; belongs to the transferase hexapeptide repeat family. Homotrimer. It depends on Mg(2+) as a cofactor.

It is found in the cytoplasm. It catalyses the reaction alpha-D-glucosamine 1-phosphate + acetyl-CoA = N-acetyl-alpha-D-glucosamine 1-phosphate + CoA + H(+). The catalysed reaction is N-acetyl-alpha-D-glucosamine 1-phosphate + UTP + H(+) = UDP-N-acetyl-alpha-D-glucosamine + diphosphate. It functions in the pathway nucleotide-sugar biosynthesis; UDP-N-acetyl-alpha-D-glucosamine biosynthesis; N-acetyl-alpha-D-glucosamine 1-phosphate from alpha-D-glucosamine 6-phosphate (route II): step 2/2. Its pathway is nucleotide-sugar biosynthesis; UDP-N-acetyl-alpha-D-glucosamine biosynthesis; UDP-N-acetyl-alpha-D-glucosamine from N-acetyl-alpha-D-glucosamine 1-phosphate: step 1/1. It participates in bacterial outer membrane biogenesis; LPS lipid A biosynthesis. In terms of biological role, catalyzes the last two sequential reactions in the de novo biosynthetic pathway for UDP-N-acetylglucosamine (UDP-GlcNAc). The C-terminal domain catalyzes the transfer of acetyl group from acetyl coenzyme A to glucosamine-1-phosphate (GlcN-1-P) to produce N-acetylglucosamine-1-phosphate (GlcNAc-1-P), which is converted into UDP-GlcNAc by the transfer of uridine 5-monophosphate (from uridine 5-triphosphate), a reaction catalyzed by the N-terminal domain. This Buchnera aphidicola subsp. Baizongia pistaciae (strain Bp) protein is Bifunctional protein GlmU.